The primary structure comprises 503 residues: SWI/SNF and RSC complexes subunit ssr2 (503 aa).

One can recognise an SWIRM domain in the interval 18-115; sequence IIVPSYAGWF…YQIDPETRPA (98 aa). Ser175 is modified (phosphoserine). The ZZ-type; degenerate zinc finger occupies 188–242; sequence RVDKVCFTCGVNCSQTWYHNLKNKKYDICPNCYKQGRFSSSFNSSDFLCMDAIDF. Cys193, Cys196, Cys216, and Cys219 together coordinate Zn(2+). Residues 245 to 296 enclose the SANT domain; sequence DEEKPWSNQETLLLLEAIETYGDDWNQIALHVGSRTKEQCLIHFLQIPIEDP. Ser306 is subject to Phosphoserine.

It belongs to the SMARCC family. In terms of assembly, component of the RSC complex composed of at least arp9, arp42, rsc1, rsc4, rsc7, rsc9, rsc58, sfh1, snf21, ssr1, ssr2, ssr3 and ssr4. The complex interacts with histone and histone variant components of centromeric chromatin. Component of the SWI/SNF global transcription activator complex composed of at least arp9, arp42, snf5, snf22, snf30, sbf59, sol1, ssr1, ssr2, ssr3, ssr4 and tfg3.

The protein localises to the cytoplasm. Its subcellular location is the nucleus. Component of the chromatin structure remodeling complex (RSC), which is involved in transcription regulation and nucleosome positioning. Controls particularly membrane and organelle development genes. Part of the SWI/SNF complex, an ATP-dependent chromatin remodeling complex, required for the positive and negative regulation of gene expression of a large number of genes. It changes chromatin structure by altering DNA-histone contacts within a nucleosome, leading eventually to a change in nucleosome position, thus facilitating or repressing binding of gene-specific transcription factors. This chain is SWI/SNF and RSC complexes subunit ssr2 (ssr2), found in Schizosaccharomyces pombe (strain 972 / ATCC 24843) (Fission yeast).